Here is a 218-residue protein sequence, read N- to C-terminus: Hypoxanthine-guanine phosphoribosyltransferase (218 aa).

Ala2 is modified (N-acetylalanine). GMP is bound at residue Lys69. An N6-acetyllysine modification is found at Lys103. Lys115 is covalently cross-linked (Glycyl lysine isopeptide (Lys-Gly) (interchain with G-Cter in SUMO1); alternate). Lys115 participates in a covalent cross-link: Glycyl lysine isopeptide (Lys-Gly) (interchain with G-Cter in SUMO2); alternate. GMP is bound by residues 134-142 (EDIIDTGKT), Lys166, 186-188 (KFV), and Asp194. Catalysis depends on Asp138, which acts as the Proton acceptor. A Phosphothreonine modification is found at Thr142. Asp194 provides a ligand contact to Mg(2+).

Belongs to the purine/pyrimidine phosphoribosyltransferase family. As to quaternary structure, homotetramer. It depends on Mg(2+) as a cofactor.

It localises to the cytoplasm. It catalyses the reaction IMP + diphosphate = hypoxanthine + 5-phospho-alpha-D-ribose 1-diphosphate. The catalysed reaction is GMP + diphosphate = guanine + 5-phospho-alpha-D-ribose 1-diphosphate. The protein operates within purine metabolism; IMP biosynthesis via salvage pathway; IMP from hypoxanthine: step 1/1. In terms of biological role, converts guanine to guanosine monophosphate, and hypoxanthine to inosine monophosphate. Transfers the 5-phosphoribosyl group from 5-phosphoribosylpyrophosphate onto the purine. Plays a central role in the generation of purine nucleotides through the purine salvage pathway. In Cricetulus griseus (Chinese hamster), this protein is Hypoxanthine-guanine phosphoribosyltransferase (HPRT1).